The primary structure comprises 236 residues: Phosphoribosylaminoimidazole-succinocarboxamide synthase (236 aa).

The protein belongs to the SAICAR synthetase family.

It catalyses the reaction 5-amino-1-(5-phospho-D-ribosyl)imidazole-4-carboxylate + L-aspartate + ATP = (2S)-2-[5-amino-1-(5-phospho-beta-D-ribosyl)imidazole-4-carboxamido]succinate + ADP + phosphate + 2 H(+). Its pathway is purine metabolism; IMP biosynthesis via de novo pathway; 5-amino-1-(5-phospho-D-ribosyl)imidazole-4-carboxamide from 5-amino-1-(5-phospho-D-ribosyl)imidazole-4-carboxylate: step 1/2. This chain is Phosphoribosylaminoimidazole-succinocarboxamide synthase, found in Rickettsia felis (strain ATCC VR-1525 / URRWXCal2) (Rickettsia azadi).